The sequence spans 1589 residues: Pentafunctional AROM polypeptide (1589 aa).

A 3-dehydroquinate synthase region spans residues Met-1–Asp-392. NAD(+) contacts are provided by residues Asp-43–Asn-45, Glu-78–Lys-81, Gly-109–Ile-111, and Asp-114. Residue Arg-125 participates in 7-phospho-2-dehydro-3-deoxy-D-arabino-heptonate binding. An NAD(+)-binding site is contributed by Thr-134 to Ser-135. 7-phospho-2-dehydro-3-deoxy-D-arabino-heptonate contacts are provided by Asp-141 and Lys-147. Residue Lys-156 participates in NAD(+) binding. Residue Asn-157 participates in 7-phospho-2-dehydro-3-deoxy-D-arabino-heptonate binding. NAD(+) is bound by residues Trp-174–Thr-177 and Asn-185. Position 189 (Glu-189) interacts with Zn(2+). 7-phospho-2-dehydro-3-deoxy-D-arabino-heptonate-binding positions include Glu-189–Lys-192 and Lys-258. The active-site Proton acceptor; for 3-dehydroquinate synthase activity is Glu-268. 7-phospho-2-dehydro-3-deoxy-D-arabino-heptonate contacts are provided by residues Arg-272–Asn-276 and His-279. His-279 contacts Zn(2+). His-283 serves as the catalytic Proton acceptor; for 3-dehydroquinate synthase activity. Positions 295 and 364 each coordinate 7-phospho-2-dehydro-3-deoxy-D-arabino-heptonate. His-295 provides a ligand contact to Zn(2+). The tract at residues Val-405–Ala-872 is EPSP synthase. Catalysis depends on Cys-854, which acts as the For EPSP synthase activity. The segment at Ser-891–Cys-1081 is shikimate kinase. An ATP-binding site is contributed by Gly-896 to Ser-903. The segment at Leu-1082–Gln-1294 is 3-dehydroquinase. His-1199 acts as the Proton acceptor; for 3-dehydroquinate dehydratase activity in catalysis. Residue Lys-1228 is the Schiff-base intermediate with substrate; for 3-dehydroquinate dehydratase activity of the active site. The shikimate dehydrogenase stretch occupies residues Ser-1307–Asp-1589.

This sequence in the N-terminal section; belongs to the sugar phosphate cyclases superfamily. Dehydroquinate synthase family. In the 2nd section; belongs to the EPSP synthase family. The protein in the 3rd section; belongs to the shikimate kinase family. It in the 4th section; belongs to the type-I 3-dehydroquinase family. This sequence in the C-terminal section; belongs to the shikimate dehydrogenase family. In terms of assembly, homodimer. Zn(2+) is required as a cofactor.

It is found in the cytoplasm. It catalyses the reaction 7-phospho-2-dehydro-3-deoxy-D-arabino-heptonate = 3-dehydroquinate + phosphate. It carries out the reaction 3-dehydroquinate = 3-dehydroshikimate + H2O. The catalysed reaction is shikimate + NADP(+) = 3-dehydroshikimate + NADPH + H(+). The enzyme catalyses shikimate + ATP = 3-phosphoshikimate + ADP + H(+). It catalyses the reaction 3-phosphoshikimate + phosphoenolpyruvate = 5-O-(1-carboxyvinyl)-3-phosphoshikimate + phosphate. Its pathway is metabolic intermediate biosynthesis; chorismate biosynthesis; chorismate from D-erythrose 4-phosphate and phosphoenolpyruvate: step 2/7. It participates in metabolic intermediate biosynthesis; chorismate biosynthesis; chorismate from D-erythrose 4-phosphate and phosphoenolpyruvate: step 3/7. It functions in the pathway metabolic intermediate biosynthesis; chorismate biosynthesis; chorismate from D-erythrose 4-phosphate and phosphoenolpyruvate: step 4/7. The protein operates within metabolic intermediate biosynthesis; chorismate biosynthesis; chorismate from D-erythrose 4-phosphate and phosphoenolpyruvate: step 5/7. Its pathway is metabolic intermediate biosynthesis; chorismate biosynthesis; chorismate from D-erythrose 4-phosphate and phosphoenolpyruvate: step 6/7. In terms of biological role, the AROM polypeptide catalyzes 5 consecutive enzymatic reactions in prechorismate polyaromatic amino acid biosynthesis. This chain is Pentafunctional AROM polypeptide, found in Zygosaccharomyces rouxii (strain ATCC 2623 / CBS 732 / NBRC 1130 / NCYC 568 / NRRL Y-229).